We begin with the raw amino-acid sequence, 150 residues long: Urease subunit beta (150 aa).

A compositionally biased stretch (low complexity) spans 122 to 140; it reads GAVVGDSPAATPGTTGATG. The tract at residues 122-150 is disordered; the sequence is GAVVGDSPAATPGTTGATGDLPGYLGEGS.

This sequence belongs to the urease beta subunit family. In terms of assembly, heterotrimer of UreA (gamma), UreB (beta) and UreC (alpha) subunits. Three heterotrimers associate to form the active enzyme.

It is found in the cytoplasm. It catalyses the reaction urea + 2 H2O + H(+) = hydrogencarbonate + 2 NH4(+). It functions in the pathway nitrogen metabolism; urea degradation; CO(2) and NH(3) from urea (urease route): step 1/1. In Frankia alni (strain DSM 45986 / CECT 9034 / ACN14a), this protein is Urease subunit beta.